Consider the following 1708-residue polypeptide: Clathrin heavy chain 2 (1708 aa).

Positions 1–492 (MAAANAPIAM…VDNDLALKIY (492 aa)) are globular terminal domain. WD40-like repeat regions lie at residues 25–67 (FVTF…RPIT), 68–113 (ADSA…MPEQ), 114–155 (VVFW…ANLA), 156–205 (NNQI…QALE), 206–270 (AHAA…PDFQ), 271–314 (DDFP…ISPD), and 315–343 (PIFLTAESSASGGFYAINRRGQVLHATVN). Residues 462-478 (ENWLAEDKLECSEELGD) form a binding site for the uncoating ATPase, involved in lattice disassembly region. The interval 493 to 536 (IKARATPKVVAAFAERREFDKILIYSKQVGYTPDYLFLLQTILR) is flexible linker. The distal segment stretch occupies residues 537–648 (TDPQGAVNFA…RALQHYTELP (112 aa)). The interval 537–1708 (TDPQGAVNFA…AYGMPPMGSY (1172 aa)) is heavy chain arm. CHCR repeat units follow at residues 551–697 (QMEG…QIVV), 700–842 (AKEY…PEDF), 847–986 (ILSV…QLID), 993–1138 (LPES…VSEA), 1142–1283 (FIRA…FRLA), 1288–1434 (LNII…DLIN), and 1437–1580 (LNVL…KECF). The interval 653–1708 (VMVNTHAIEP…AYGMPPMGSY (1056 aa)) is proximal segment. Residues 1227 to 1536 (AAKIIYAFIS…YIYKKAGRWK (310 aa)) are involved in binding clathrin light chain. Residues 1564 to 1708 (SEDLLVYFIE…AYGMPPMGSY (145 aa)) form a trimerization region.

It belongs to the clathrin heavy chain family. As to quaternary structure, clathrin triskelions, composed of 3 heavy chains and 3 light chains, are the basic subunits of the clathrin coat.

Its subcellular location is the cytoplasmic vesicle membrane. The protein localises to the membrane. The protein resides in the coated pit. In terms of biological role, clathrin is the major protein of the polyhedral coat of coated pits and vesicles. In Oryza sativa subsp. japonica (Rice), this protein is Clathrin heavy chain 2.